A 569-amino-acid polypeptide reads, in one-letter code: Rab GTPase-binding effector protein 2 (569 aa).

Disordered regions lie at residues 1 to 38 (MAAA…AELG), 181 to 267 (QRRP…ASLV), and 388 to 414 (RAEQ…PSSV). The residue at position 2 (Ala2) is an N-acetylalanine. The segment covering 29-38 (EGANGEAELG) has biased composition (low complexity). Residues 34–184 (EAELGELSRL…ELIQEIQRRP (151 aa)) are a coiled coil. Phosphoserine occurs at positions 189, 193, 200, and 204. Low complexity predominate over residues 245–257 (SSSSLPRSRQGLS). Positions 292-391 (WEQLQMEGRQ…EENQGLRAEQ (100 aa)) form a coiled coil. The segment covering 393 to 403 (PSSAPQGPQQE) has biased composition (low complexity). Positions 423 to 523 (RTRQEARAQL…LQAELETSEQ (101 aa)) form a coiled coil.

It belongs to the rabaptin family. Heterodimer with RABGEF1. The dimer binds RAB5A that has been activated by GTP-binding. Interacts with SDCCAG8; this interaction is important for ciliogenesis regulation. Interacts with RAB4; this interaction may mediate VEGFR2 cell surface expression.

The protein resides in the cytoplasm. Its subcellular location is the early endosome. It is found in the cytoskeleton. The protein localises to the microtubule organizing center. It localises to the centrosome. The protein resides in the cilium basal body. Its function is as follows. Plays a role in membrane trafficking and in homotypic early endosome fusion. Participates in arteriogenesis by regulating vascular endothelial growth factor receptor 2/VEGFR2 cell surface expression and endosomal trafficking. By interacting with SDCCAG8, localizes to centrosomes and plays a critical role in ciliogenesis. The protein is Rab GTPase-binding effector protein 2 (RABEP2) of Pongo abelii (Sumatran orangutan).